Reading from the N-terminus, the 961-residue chain is Ras-interacting protein 1 (961 aa).

Residues 1-10 (MLSGERKEGG) are compositionally biased toward basic and acidic residues. 3 disordered regions span residues 1 to 21 (MLSG…HLPV), 35 to 70 (LGRR…PHVE), and 96 to 116 (RGSG…QRWA). A compositionally biased stretch (low complexity) spans 41-57 (SAASVKSSSSDTGSRSS). A compositionally biased stretch (pro residues) spans 59-68 (PLPPPPPPPH). Residue arginine 96 is modified to Omega-N-methylarginine. Positions 98-110 (SGAGGAGGPGTPG) are enriched in gly residues. Residues 141–253 (PPGVLKIFAS…RRFELRGREE (113 aa)) enclose the Ras-associating domain. The segment at 261–352 (AFGAADADGT…MAPGAADAQM (92 aa)) is disordered. Phosphoserine is present on residues serine 274 and serine 286. Over residues 284-295 (AASGGAALASPG) the composition is skewed to low complexity. Positions 296–307 (PGSGSGTPTGSG) are enriched in gly residues. Over residues 314 to 327 (NLSLRRSVSELSLQ) the composition is skewed to low complexity. 4 positions are modified to phosphoserine: serine 320, serine 322, serine 325, and serine 413. One can recognise a Dilute domain in the interval 594 to 895 (GRLARLIKEA…PPAERDAVDT (302 aa)).

In terms of assembly, interacts with Ras family members that have been activated by GTP binding. Interacts with HRAS, RAP1A, RAP2, RRAS, RAF1 and RRAS2. Interacts with MYH9 and ARHGAP29. As to expression, detected in kidney, heart, skeletal muscle, small intestine and lung.

The protein resides in the cytoplasm. It localises to the perinuclear region. The protein localises to the golgi apparatus. Its subcellular location is the golgi stack. Its function is as follows. Required for the proper formation of vascular structures that develop via both vasculogenesis and angiogenesis. Acts as a critical and vascular-specific regulator of GTPase signaling, cell architecture, and adhesion, which is essential for endothelial cell morphogenesis and blood vessel tubulogenesis. Regulates the activity of Rho GTPases in part by recruiting ARHGAP29 and suppressing RhoA signaling and dampening ROCK and MYH9 activities in endothelial cells. May act as effector for Golgi-bound HRAS and other Ras-like proteins. May promote HRAS-mediated transformation. Negative regulator of amino acid starvation-induced autophagy. The chain is Ras-interacting protein 1 (Rasip1) from Mus musculus (Mouse).